Here is a 355-residue protein sequence, read N- to C-terminus: Neurogenic differentiation factor 1 (355 aa).

Residues 1-93 (MTKSYSESGL…GPKKKKMTKA (93 aa)) form a disordered region. The span at 58 to 77 (DEEDEDEDLEEEDEEEEEDD) shows a compositional bias: acidic residues. Over residues 80 to 92 (PKRRGPKKKKMTK) the composition is skewed to basic residues. The Nuclear localization signal signature appears at 86-92 (KKKKMTK). Residues 100 to 152 (LRRMKANARERNRMHGLNAALDNLRKVVPCYSKTQKLSKIETLRLAKNYIWAL) enclose the bHLH domain. Phosphoserine occurs at positions 161, 258, 265, and 273. Position 334 is a phosphoserine; by CaMK2 (S334).

Efficient DNA-binding requires dimerization with another bHLH protein. Heterodimer with TCF3/E47; the heterodimer is inhibited in presence of ID2, but not NR0B2, to E-box element. Interacts with EP300; the interaction is inhibited by NR0B2. Interacts with RREB1. Interacts with ATOH8. Post-translationally, phosphorylated. In islet cells, phosphorylated on Ser-273 upon glucose stimulation; which may be required for nuclear localization. In activated neurons, phosphorylated on Ser-334; which promotes dendritic growth. Phosphorylated by MAPK1; phosphorylation regulates heterodimerization and DNA-binding activities. Phosphorylation on Ser-265 and Ser-273 increases transactivation on the insulin promoter in glucose-stimulated insulinoma cells. As to expression, most abundant in pancreatic alpha- and beta-cells, less in brain and intestine.

The protein localises to the cytoplasm. The protein resides in the nucleus. Acts as a transcriptional activator: mediates transcriptional activation by binding to E box-containing promoter consensus core sequences 5'-CANNTG-3'. Associates with the p300/CBP transcription coactivator complex to stimulate transcription of the secretin gene as well as the gene encoding the cyclin-dependent kinase inhibitor CDKN1A. Contributes to the regulation of several cell differentiation pathways, like those that promote the formation of early retinal ganglion cells, inner ear sensory neurons, granule cells forming either the cerebellum or the dentate gyrus cell layer of the hippocampus, endocrine islet cells of the pancreas and enteroendocrine cells of the small intestine. Together with PAX6 or SIX3, is required for the regulation of amacrine cell fate specification. Also required for dendrite morphogenesis and maintenance in the cerebellar cortex. Associates with chromatin to enhancer regulatory elements in genes encoding key transcriptional regulators of neurogenesis. This chain is Neurogenic differentiation factor 1 (NEUROD1), found in Mesocricetus auratus (Golden hamster).